The chain runs to 310 residues: Aspartate carbamoyltransferase catalytic subunit (310 aa).

Arg-58 and Thr-59 together coordinate carbamoyl phosphate. L-aspartate is bound at residue Lys-86. Arg-108, His-136, and Gln-139 together coordinate carbamoyl phosphate. L-aspartate contacts are provided by Arg-169 and Arg-224. Positions 265 and 266 each coordinate carbamoyl phosphate.

It belongs to the aspartate/ornithine carbamoyltransferase superfamily. ATCase family. In terms of assembly, heterododecamer (2C3:3R2) of six catalytic PyrB chains organized as two trimers (C3), and six regulatory PyrI chains organized as three dimers (R2).

It carries out the reaction carbamoyl phosphate + L-aspartate = N-carbamoyl-L-aspartate + phosphate + H(+). The protein operates within pyrimidine metabolism; UMP biosynthesis via de novo pathway; (S)-dihydroorotate from bicarbonate: step 2/3. Catalyzes the condensation of carbamoyl phosphate and aspartate to form carbamoyl aspartate and inorganic phosphate, the committed step in the de novo pyrimidine nucleotide biosynthesis pathway. The chain is Aspartate carbamoyltransferase catalytic subunit from Trichlorobacter lovleyi (strain ATCC BAA-1151 / DSM 17278 / SZ) (Geobacter lovleyi).